The chain runs to 573 residues: Adenine deaminase (573 aa).

This sequence belongs to the metallo-dependent hydrolases superfamily. Adenine deaminase family. Mn(2+) is required as a cofactor.

It carries out the reaction adenine + H2O + H(+) = hypoxanthine + NH4(+). The chain is Adenine deaminase from Bacillus licheniformis (strain ATCC 14580 / DSM 13 / JCM 2505 / CCUG 7422 / NBRC 12200 / NCIMB 9375 / NCTC 10341 / NRRL NRS-1264 / Gibson 46).